The following is a 150-amino-acid chain: Testis-expressed protein 22 (150 aa).

Residues 1–23 (MDSRKLSPRGKKLESHLSQEHRR) show a composition bias toward basic and acidic residues. The interval 1–26 (MDSRKLSPRGKKLESHLSQEHRRPPL) is disordered.

It localises to the cytoplasm. Its subcellular location is the cytoplasmic vesicle. The protein localises to the secretory vesicle. The protein resides in the acrosome. This chain is Testis-expressed protein 22 (TEX22), found in Homo sapiens (Human).